The sequence spans 121 residues: LHHQIIPVLSQQQTPTHALQPHHHIPVMAAQQPMQPQQPMMPMPGQPSVTPTQHHQSNLPQPAQQPFQPQVPQQPPHQPIQPQAPAHPMPPMPQPPLPPMFPMQPLPPLLPDLPLEQWPAT.

Disordered stretches follow at residues Leu-1–Gln-20 and Gln-32–Thr-121. Positions Ser-48–Asn-58 are enriched in polar residues. Low complexity predominate over residues Leu-59–Val-71. Positions Pro-85–Pro-111 are enriched in pro residues.

It belongs to the amelogenin family.

It localises to the secreted. It is found in the extracellular space. Its subcellular location is the extracellular matrix. Plays a role in the biomineralization of teeth. Seems to regulate the formation of crystallites during the secretory stage of tooth enamel development. Thought to play a major role in the structural organization and mineralization of developing enamel. The polypeptide is Amelogenin (AMEL) (Ornithorhynchus anatinus (Duckbill platypus)).